Consider the following 141-residue polypeptide: Large ribosomal subunit protein uL11 (141 aa).

Belongs to the universal ribosomal protein uL11 family. In terms of assembly, part of the ribosomal stalk of the 50S ribosomal subunit. Interacts with L10 and the large rRNA to form the base of the stalk. L10 forms an elongated spine to which L12 dimers bind in a sequential fashion forming a multimeric L10(L12)X complex. One or more lysine residues are methylated.

In terms of biological role, forms part of the ribosomal stalk which helps the ribosome interact with GTP-bound translation factors. This chain is Large ribosomal subunit protein uL11, found in Prochlorococcus marinus (strain MIT 9313).